A 324-amino-acid polypeptide reads, in one-letter code: Cytochrome f (324 aa).

The first 30 residues, 1 to 30 (MNMRFSPKALVRQLGRLSLVACLSLGLLGA), serve as a signal peptide directing secretion. Residues tyrosine 42, cysteine 62, cysteine 65, and histidine 66 each coordinate heme. The chain crosses the membrane as a helical span at residues 290-310 (VLGVIAFFFAVMLAQIMLVLK).

This sequence belongs to the cytochrome f family. The 4 large subunits of the cytochrome b6-f complex are cytochrome b6, subunit IV (17 kDa polypeptide, PetD), cytochrome f and the Rieske protein, while the 4 small subunits are PetG, PetL, PetM and PetN. The complex functions as a dimer. Heme is required as a cofactor.

It localises to the cellular thylakoid membrane. In terms of biological role, component of the cytochrome b6-f complex, which mediates electron transfer between photosystem II (PSII) and photosystem I (PSI), cyclic electron flow around PSI, and state transitions. This is Cytochrome f from Synechococcus elongatus (strain ATCC 33912 / PCC 7942 / FACHB-805) (Anacystis nidulans R2).